Here is a 130-residue protein sequence, read N- to C-terminus: Small ribosomal subunit protein uS8 (130 aa).

Belongs to the universal ribosomal protein uS8 family. Part of the 30S ribosomal subunit. Contacts proteins S5 and S12.

Its function is as follows. One of the primary rRNA binding proteins, it binds directly to 16S rRNA central domain where it helps coordinate assembly of the platform of the 30S subunit. This chain is Small ribosomal subunit protein uS8, found in Vibrio campbellii (strain ATCC BAA-1116).